The following is a 1880-amino-acid chain: MDLRTGYMFPCLTDGQFVEDDTLHSVALGIDSPISLSNGPDGEWARELSIAWAILLFTYNEQEAVEFACLRNQHWFCVDAKMNRDLSWKDIEIHEGGTSDGRQVNTGLCLSQEGATPIPTRLQLVLVGSISGGGLSLEYRPNLLSAEQAANVASTLETIMRALQGRTVSIGSIDVLSERNITDLNRFAVARRALPEGCLDDIITAQAVERGNSIAIDSWDGTLSYQELDTLSTLLAKYLRSLDLSGTYVPLCADKSAWAVVAMLAILKAGAACSPLDPSHPRSRLQSMVQLCDAKAVIATERHASLLQMDGVEVVVVGPDMSSFLQHQISPAEAPGPSHRDVAFLMWTSGSTGAPKGVILEHTALFMSISAYAAANQFSAETRCFQFTSFTFAVSLCDIFGTLSQGGCLCMPSETQRLTDLTGALRELHATFCWLTSTSLADLNPHDLPDLRSVTVGGESLSRELVARWATHLRLTVSYGTTETAGWCLLNTGLSPTGDARTLGRPTIPGVWIAHPDNVNRLVPVGAVGELLVEGPFLAQGYLDDEERTAAHFIPPPSWMTQFRPQEVTRLYRTNDLVRYNSDGSVSFVGRRQAHAKIRGNRISLPEIEAQVRHSCKDAQAVVELVTTKDQVEMLTAFLVVSGQESLSEAPLICPPNDCFRETVTNSLSVLEQSLPSYMVPTVFVPLSHIPLTRTNKADRHVLRKLAEAMSRADLVQLMTKPRPVEQLPLSPLERQIQGLWADLTNIPAESIGPDDNFFHLGGDSVLAIHLVPLARRHGLSLTVQDVFRYPKMKELGAHLEQEASQGSQRSKSQPIASFDPTPWKSVAAQQCGIDELAIEDVYPCTALQEGLMALSAQRTGAYILSMAQNLSPTVDLGRLLEAWQTVVKAVPILRTRIVRLTNEGFHQAVVDESIEWQSVKSEAEFRRMNQLNPLGLGTRLVRFALLLSAADQPSRLLLAMHHSVFDRWSGPLLVRAVEDAYQGQPVMPQYFKDFVSYVSTCPREEVDAFWRHQLSDADPTVFPPTPEPNYLPSPTKSSERIILLPLSRTHVTITTKLRLCWALVLSQHTGNADVVFGAVSTGRSARVEGIESLIGPTLATVPFRVRIDGSAMVSDALQALQDDAATMLPYEQRGLQNIARISRETRAACNFQNLLIVHAPDSRGHSTILKITDDQQLLDLFSYGLTLSCEVLDQDRIQCQAFFDPNMLEHAYVKVLLDQLAHAVRQIHAVPDCKVGEISLLSPQDQQQLQEWNPPIPRTGLTIHETIQRQCLAHPQKEAVCSWDGSITYRALNELSSSLASQILQRCGQPTSFVPLLMERSKWTAVTMLAVMKAGKAFVLLDASFPVERLQSICCQLDATLILSSSKHADVAQRLVSNPLIVDAIIGLPGPSLALPVVHPDATLYAVFTSGSTGRPKAVLISHASYGSGAEAHIPAALITPATRVLQFASYAFDASIIEHLSTFMAGGCVCVLSDPERTSSLAEAVAAQRANFAWLTPSVTRFIDPQDFPTMDRLCLMGESMRRSEIERWSSRVNLMQAYGPAECSVLATLRPSLTTQSDPRNIGCARGCHAWVVDPENHTRLLPIGAVGELIIEGPIVGQGYHGSPEQTQAAFPPVPDWLSDYHDGDLSQVRVYKTGDLVQYSPKLDGSLLFIGRKDRQVKLRGQRLELSEVEYHAYHTLAGTWELVVELINSQHNPALALFLAEKQDSPKPCGVLSMTPAWRSVMSRLRDTLASRLPPYMVPTVWIPITQIPLSSSQKTDRRSLQSLAGDLSAEQYQTYILASSSEATPGLTHSHLKEVPLNENELVLQDLVRQVFTGEDGSLSVASIPMDGLFTDIGGDSLGALALTSLAKQHGFHFTAGDVLGSSLGELASLRHT.

The tract at residues 205–594 is adenylation 1; the sequence is AQAVERGNSI…SVSFVGRRQA (390 aa). Residues 728–804 enclose the Carrier domain; the sequence is LPLSPLERQI…ELGAHLEQEA (77 aa). Ser765 carries the O-(pantetheine 4'-phosphoryl)serine modification. Residues 840–1250 are condensation; that stretch reads EDVYPCTALQ…LLSPQDQQQL (411 aa). Residues 1269-1665 form an adenylation 2 region; the sequence is QRQCLAHPQK…GRKDRQVKLR (397 aa).

It belongs to the NRP synthetase family.

It carries out the reaction 7-carboxymellein + L-phenylalanine + ATP = ochratoxin B + ADP + phosphate + H(+). It functions in the pathway mycotoxin biosynthesis. Functionally, nonribosomal peptide synthetase; part of the gene cluster that mediates the biosynthesis of ochratoxin A (OTA), a mycotoxin composed of a chlorinated type I polyketide dihydroisocoumarin moiety linked to L-phenylalanine, and demonstrated to have nephrotoxic, immunotoxic, genotoxic, neurotoxic, and teratogenic properties. OtaB is responsible for the linking of phenylalanine to the dihydroisocoumarin ring. The pathway begins with the highly reducing polyketide synthase otaA that catalyzes the formation of the isocoumarin group during the initial stages of biosynthesis, starting from one acetate and 4 malonate units, to originate the characteristic pentaketide skeleton 7-methylmellein (7-MM) of the OTA molecule. The newly identified cyclase otaY might be involved in the polyketide cyclization reaction during the initial steps of the OTA biosynthesis. 7-MM is then oxidized into 7-carboxymellein (also called ochratoxin beta) by the cytochrome P450 monooxygenase otaC. The NRPS encoded by the otaB gene is involved in the linking of phenylalanine to the dihydroisocoumarin ring. The reaction catalyzed by NRPS results in the production of ochratoxin B (OTB), which is the non-chlorinated analog of OTA and which subsequently serves as the substrate of the halogenase otaD for chlorination activity to form the final molecular structure of OTA, containing a chlorine atom in the C-5 position of the molecule. In Aspergillus niger (strain ATCC MYA-4892 / CBS 513.88 / FGSC A1513), this protein is Nonribosomal peptide synthetase otaB.